A 411-amino-acid polypeptide reads, in one-letter code: Putative ion-transport protein YfeO (411 aa).

Helical transmembrane passes span 9–29 (MLLL…VLIA), 54–74 (DSPF…GLII), 99–119 (ALPG…SLGP), 149–169 (ILAS…AALI), 186–206 (LFAP…FFHP), 223–243 (IASG…AVWC), 258–278 (VLIL…GGPL), 296–316 (LGAG…VIAA), 322–342 (GGRI…LHAH), 343–363 (VEAV…VLVV), and 386–406 (LLCI…LLAA).

Belongs to the chloride channel (TC 2.A.49) family.

The protein resides in the cell membrane. The chain is Putative ion-transport protein YfeO from Salmonella agona (strain SL483).